The following is a 1091-amino-acid chain: ATP-dependent RNA helicase ddx54 (1091 aa).

Disordered regions lie at residues 1–63 (MVKP…KEEF) and 150–231 (DNSN…KTGG). The span at 26–35 (MKGKKLETKS) shows a compositional bias: basic and acidic residues. The segment covering 150–161 (DNSNFDNNGDQF) has biased composition (polar residues). The segment covering 196–207 (KKEEIESSEKFE) has biased composition (basic and acidic residues). Positions 230–258 (GGFQSMDLTKNLLKAILKKGFNVPTPIQR) match the Q motif motif. The region spanning 261–433 (IPMILDGHDI…RAGLNNPKLI (173 aa)) is the Helicase ATP-binding domain. 274–281 (ARTGSGKT) contributes to the ATP binding site. Residues 381-384 (DEAD) carry the DEAD box motif. One can recognise a Helicase C-terminal domain in the interval 478–632 (TETTTTTTTN…KFQYEGQTIN (155 aa)). Disordered regions lie at residues 801–896 (EEML…TPEN) and 933–1091 (KRKG…KSRK). Positions 814–823 (DNNKDIKMNE) are enriched in basic and acidic residues. The span at 824 to 855 (NDDENDDDDEEGENDDDEEEENEKDEDDEEDE) shows a compositional bias: acidic residues. 3 stretches are compositionally biased toward basic and acidic residues: residues 865 to 874 (ESSDKNDNNK), 944 to 975 (DADR…EEWK), and 1008 to 1019 (QGREKEKKDNKA). Positions 1020-1029 (SHAKGSHGLK) are enriched in basic residues. Residues 1031-1052 (RPSELKDKNQISKNRSEKERKM) show a composition bias toward basic and acidic residues. Residues 1068 to 1079 (SGGGGGGKGSKF) show a composition bias toward gly residues.

It belongs to the DEAD box helicase family. DDX54/DBP10 subfamily.

It localises to the nucleus. Its subcellular location is the nucleolus. The enzyme catalyses ATP + H2O = ADP + phosphate + H(+). Functionally, ATP-binding RNA helicase which may be involved in the ribosome biogenesis. This Dictyostelium discoideum (Social amoeba) protein is ATP-dependent RNA helicase ddx54 (helA).